A 137-amino-acid chain; its full sequence is Large ribosomal subunit protein uL16 (137 aa).

This sequence belongs to the universal ribosomal protein uL16 family. Part of the 50S ribosomal subunit.

In terms of biological role, binds 23S rRNA and is also seen to make contacts with the A and possibly P site tRNAs. This Bradyrhizobium sp. (strain BTAi1 / ATCC BAA-1182) protein is Large ribosomal subunit protein uL16.